A 453-amino-acid chain; its full sequence is Glutamyl-tRNA reductase (453 aa).

Residues 49 to 52 (TCNR), Ser109, 114 to 116 (EQQ), and Gln120 each bind substrate. Cys50 functions as the Nucleophile in the catalytic mechanism. 191–196 (GAGSMG) is a binding site for NADP(+). Residues 432-453 (PAAVATPTDLVDGDRTGRDLQA) form a disordered region. Basic and acidic residues predominate over residues 443–453 (DGDRTGRDLQA).

Belongs to the glutamyl-tRNA reductase family. In terms of assembly, homodimer.

It catalyses the reaction (S)-4-amino-5-oxopentanoate + tRNA(Glu) + NADP(+) = L-glutamyl-tRNA(Glu) + NADPH + H(+). The protein operates within porphyrin-containing compound metabolism; protoporphyrin-IX biosynthesis; 5-aminolevulinate from L-glutamyl-tRNA(Glu): step 1/2. In terms of biological role, catalyzes the NADPH-dependent reduction of glutamyl-tRNA(Glu) to glutamate 1-semialdehyde (GSA). This is Glutamyl-tRNA reductase from Rhodococcus erythropolis (strain PR4 / NBRC 100887).